Consider the following 517-residue polypeptide: UDP-N-acetylmuramoylalanine--D-glutamate ligase (517 aa).

Residue 143 to 149 (GTNGKTT) participates in ATP binding.

Belongs to the MurCDEF family.

It localises to the cytoplasm. It catalyses the reaction UDP-N-acetyl-alpha-D-muramoyl-L-alanine + D-glutamate + ATP = UDP-N-acetyl-alpha-D-muramoyl-L-alanyl-D-glutamate + ADP + phosphate + H(+). The protein operates within cell wall biogenesis; peptidoglycan biosynthesis. Its function is as follows. Cell wall formation. Catalyzes the addition of glutamate to the nucleotide precursor UDP-N-acetylmuramoyl-L-alanine (UMA). This is UDP-N-acetylmuramoylalanine--D-glutamate ligase from Leifsonia xyli subsp. xyli (strain CTCB07).